The chain runs to 266 residues: Norfluorocurarine synthase 2 (266 aa).

The region spanning 11 to 121 is the AB hydrolase-1 domain; sequence HFVLVHGAGH…VMPDSTHPPN (111 aa). Catalysis depends on residues Ser-86, Asp-216, and His-244.

The protein belongs to the AB hydrolase superfamily. In terms of assembly, homodimer.

It carries out the reaction 17-dehydropreakuammicine + H2O = norfluorocurarine + methanol + CO2. The protein operates within alkaloid biosynthesis. Hydrolase involved in the biosynthesis of curare monoterpene indole alkaloids (MIAs), natural products such as diaboline, a pharmacologically active compound used to regulate blood pressure. Curare alkaloids act as animal glycine receptor antagonists. Catalyzes the conversion of dehydropreakuammicine to norfluorocurarine. The polypeptide is Norfluorocurarine synthase 2 (Strychnos sp).